A 625-amino-acid polypeptide reads, in one-letter code: Glyco-Gag protein (625 aa).

The Cytoplasmic portion of the chain corresponds to 1–66 (LGDVSEASGA…SVFRRNRAAR (66 aa)). Residues 67–86 (LVCLSIVLSFVCSLLFWTAS) traverse the membrane as a helical segment. The Extracellular portion of the chain corresponds to 87 to 625 (KNMGQTVTTP…PQTSLLTLDD (539 aa)). Asparagine 113 carries N-linked (GlcNAc...) asparagine; by host glycosylation. A disordered region spans residues 195-305 (PSPTAPILPS…STTSRAFPLR (111 aa)). Residue asparagine 479 is glycosylated (N-linked (GlcNAc...) asparagine; by host). Composition is skewed to basic and acidic residues over residues 522 to 553 (ETPEEREERVRRETEEKEERRRAEEEQKEKER) and 573 to 606 (RQDRQGGERRRPQLDKDQCAYCKEKGHWAKDCPK). The interval 522 to 625 (ETPEEREERV…PQTSLLTLDD (104 aa)) is disordered.

Glycosylated by host. In terms of processing, cleaved by host near the middle of the molecule, releasing the c-terminal half containing capsid and nucleoprotein domains op GAG.

It localises to the host cell membrane. Plays a role in viral particle release. Presumably acts by facilitating the fission of the virion bud at the cell surface. May prevent the antiviral activity of murine APOBEC3. This is Glyco-Gag protein from AKV murine leukemia virus (AKR (endogenous) murine leukemia virus).